Here is a 150-residue protein sequence, read N- to C-terminus: Globin (150 aa).

The 140-residue stretch at 11–150 (PLSAAEKTKI…MICILLRSAY (140 aa)) folds into the Globin domain. Residues H74 and H106 each coordinate heme b.

This sequence belongs to the globin family. As to quaternary structure, monomer.

This chain is Globin, found in Lampetra fluviatilis (European river lamprey).